We begin with the raw amino-acid sequence, 73 residues long: Conotoxin Cl9.2 (73 aa).

The N-terminal stretch at 1-18 is a signal peptide; the sequence is MSKLVILAVLVLLPLVTA. Positions 19–41 are excised as a propeptide; the sequence is EHGRDEQAMQPEKKTMWTLWSLT. Cystine bridges form between C46-C61, C52-C63, and C58-C72.

In terms of tissue distribution, expressed by the venom duct.

The protein localises to the secreted. This Californiconus californicus (California cone) protein is Conotoxin Cl9.2.